Consider the following 341-residue polypeptide: GTPase Obg (341 aa).

In terms of domain architecture, Obg spans M1 to L159. A disordered region spans residues T128–R150. The segment covering R129–G144 has biased composition (polar residues). Residues A160–D334 enclose the OBG-type G domain. GTP is bound by residues G166 to S173, F191 to H195, D213 to G216, N283 to D286, and S315 to I317. Residues S173 and T193 each coordinate Mg(2+).

This sequence belongs to the TRAFAC class OBG-HflX-like GTPase superfamily. OBG GTPase family. As to quaternary structure, monomer. Requires Mg(2+) as cofactor.

Its subcellular location is the cytoplasm. In terms of biological role, an essential GTPase which binds GTP, GDP and possibly (p)ppGpp with moderate affinity, with high nucleotide exchange rates and a fairly low GTP hydrolysis rate. Plays a role in control of the cell cycle, stress response, ribosome biogenesis and in those bacteria that undergo differentiation, in morphogenesis control. The chain is GTPase Obg from Legionella pneumophila (strain Lens).